The chain runs to 324 residues: MIRGRLAPSPTGNIHLGNAWAFMLAWLAARQAGGKVLLRMEDIDPDRARPEYAEGIMADLRWLGLDWDEGPDIGGPCGPYVQSRRVQDYARVLDVLATLGAVYPCYCTRKELRTLAGAPHPGDLGAPYPGTCRNLTIEECSRKEKEGRRPAMRLRWPDGVFAFDDGLFGPQQAGGESCGGDFALRRSDGVFAYQLAVVVDDIAMGVTQVVRGADLLSCTPRQLALYSLLGAQPPAYLHVPLLLDATGERLAKRHQSLEIRALRNAGVPAANITGYLAMLAGMIPDFVPRAPKDCVGLLSTATLPTRPLVTPADILDRLKKGTSR.

L-glutamate-binding positions include 5–9 and glutamate 41; that span reads RLAPS. Positions 8 to 18 match the 'HIGH' region motif; sequence PSPTGNIHLGN. Residues cysteine 105, cysteine 107, tyrosine 128, and cysteine 132 each coordinate Zn(2+). L-glutamate contacts are provided by tyrosine 193 and arginine 211. The 'KMSKS' region motif lies at 249–253; that stretch reads RLAKR. An ATP-binding site is contributed by lysine 252.

Belongs to the class-I aminoacyl-tRNA synthetase family. GluQ subfamily. It depends on Zn(2+) as a cofactor.

In terms of biological role, catalyzes the tRNA-independent activation of glutamate in presence of ATP and the subsequent transfer of glutamate onto a tRNA(Asp). Glutamate is transferred on the 2-amino-5-(4,5-dihydroxy-2-cyclopenten-1-yl) moiety of the queuosine in the wobble position of the QUC anticodon. This chain is Glutamyl-Q tRNA(Asp) synthetase, found in Nitratidesulfovibrio vulgaris (strain ATCC 29579 / DSM 644 / CCUG 34227 / NCIMB 8303 / VKM B-1760 / Hildenborough) (Desulfovibrio vulgaris).